The chain runs to 451 residues: Glycine--tRNA ligase (451 aa).

2 residues coordinate substrate: R99 and E168. Residues 200–202 (RNE), 210–215 (FRTREF), 284–285 (EL), and 328–331 (GLDR) contribute to the ATP site. 215-219 (FEQME) contributes to the substrate binding site. Residue 324–328 (EPSVG) participates in substrate binding.

The protein belongs to the class-II aminoacyl-tRNA synthetase family. In terms of assembly, homodimer.

The protein localises to the cytoplasm. It catalyses the reaction tRNA(Gly) + glycine + ATP = glycyl-tRNA(Gly) + AMP + diphosphate. In terms of biological role, catalyzes the attachment of glycine to tRNA(Gly). In Mycoplasmopsis synoviae (strain 53) (Mycoplasma synoviae), this protein is Glycine--tRNA ligase.